Here is a 559-residue protein sequence, read N- to C-terminus: NAD(P)H-quinone oxidoreductase chain 4-2 (559 aa).

14 helical membrane-spanning segments follow: residues 5 to 25 (FPWL…IPLI), 35 to 55 (WYAL…FWTN), 86 to 106 (ISMP…FAAW), 114 to 134 (LFYF…VAQD), 136 to 156 (LLLF…VCIW), 168 to 188 (FLLY…GLAF), 207 to 227 (IALE…KLAI), 242 to 262 (SAPV…YGLI), 274 to 294 (VYFA…GGFS), 310 to 330 (VSHM…GISG), 331 to 351 (AMLQ…LAGV), 374 to 394 (VFAL…MSGF), 417 to 437 (VTVF…LSML), and 488 to 508 (VFIA…PKLA).

Belongs to the complex I subunit 4 family.

The protein resides in the cellular thylakoid membrane. The catalysed reaction is a plastoquinone + NADH + (n+1) H(+)(in) = a plastoquinol + NAD(+) + n H(+)(out). It catalyses the reaction a plastoquinone + NADPH + (n+1) H(+)(in) = a plastoquinol + NADP(+) + n H(+)(out). Its function is as follows. NDH-1 shuttles electrons from NAD(P)H, via FMN and iron-sulfur (Fe-S) centers, to quinones in the respiratory chain. The immediate electron acceptor for the enzyme in this species is believed to be plastoquinone. Couples the redox reaction to proton translocation (for every two electrons transferred, four hydrogen ions are translocated across the cytoplasmic membrane), and thus conserves the redox energy in a proton gradient. The sequence is that of NAD(P)H-quinone oxidoreductase chain 4-2 (ndhD2) from Synechocystis sp. (strain ATCC 27184 / PCC 6803 / Kazusa).